Consider the following 238-residue polypeptide: Trypsin-3 (238 aa).

A signal peptide spans 1–7 (FAVAFAA). A propeptide spans 8-15 (PIDDEDDK) (activation peptide). Residues 16–236 (IVGGYECRKN…YRSWISSTMS (221 aa)) enclose the Peptidase S1 domain. 6 cysteine pairs are disulfide-bonded: C22–C152, C40–C56, C124–C225, C131–C198, C163–C177, and C188–C212. The active-site Charge relay system is H55. E67, N69, V72, and E77 together coordinate Ca(2+). D99 (charge relay system) is an active-site residue. S192 functions as the Charge relay system in the catalytic mechanism.

It belongs to the peptidase S1 family. Ca(2+) serves as cofactor.

It localises to the secreted. It is found in the extracellular space. It catalyses the reaction Preferential cleavage: Arg-|-Xaa, Lys-|-Xaa.. In Salmo salar (Atlantic salmon), this protein is Trypsin-3.